The primary structure comprises 266 residues: 3-methyl-2-oxobutanoate hydroxymethyltransferase (266 aa).

Mg(2+)-binding residues include Asp-45 and Asp-84. Residues 45 to 46 (DS), Asp-84, and Lys-112 contribute to the 3-methyl-2-oxobutanoate site. A Mg(2+)-binding site is contributed by Glu-114. Glu-181 functions as the Proton acceptor in the catalytic mechanism.

Belongs to the PanB family. In terms of assembly, homodecamer; pentamer of dimers. It depends on Mg(2+) as a cofactor.

It localises to the cytoplasm. The catalysed reaction is 3-methyl-2-oxobutanoate + (6R)-5,10-methylene-5,6,7,8-tetrahydrofolate + H2O = 2-dehydropantoate + (6S)-5,6,7,8-tetrahydrofolate. It participates in cofactor biosynthesis; (R)-pantothenate biosynthesis; (R)-pantoate from 3-methyl-2-oxobutanoate: step 1/2. Its function is as follows. Catalyzes the reversible reaction in which hydroxymethyl group from 5,10-methylenetetrahydrofolate is transferred onto alpha-ketoisovalerate to form ketopantoate. The polypeptide is 3-methyl-2-oxobutanoate hydroxymethyltransferase (Pseudomonas syringae pv. tomato (strain ATCC BAA-871 / DC3000)).